Reading from the N-terminus, the 494-residue chain is Hydroxyneurosporene desaturase (494 aa).

This sequence belongs to the carotenoid/retinoid oxidoreductase family.

The catalysed reaction is rhodopin + A = (3E)-3,4-didehydrorhodopin + AH2. It participates in carotenoid biosynthesis; spheroidene biosynthesis. In terms of biological role, catalyzes the introduction of C-3,4 double bonds into 1-hydroxyneurosporene (1-HO-Neu) to yield demethylspheroidene (DMS). The chain is Hydroxyneurosporene desaturase (crtD) from Rhodobacter capsulatus (strain ATCC BAA-309 / NBRC 16581 / SB1003).